The following is a 31-amino-acid chain: Cytochrome b6-f complex subunit 6 (31 aa).

The chain crosses the membrane as a helical span at residues 4–24; the sequence is ITSYFGFLLAALTITSVLFIG.

The protein belongs to the PetL family. In terms of assembly, the 4 large subunits of the cytochrome b6-f complex are cytochrome b6, subunit IV (17 kDa polypeptide, PetD), cytochrome f and the Rieske protein, while the 4 small subunits are PetG, PetL, PetM and PetN. The complex functions as a dimer.

The protein resides in the plastid. It is found in the chloroplast thylakoid membrane. In terms of biological role, component of the cytochrome b6-f complex, which mediates electron transfer between photosystem II (PSII) and photosystem I (PSI), cyclic electron flow around PSI, and state transitions. PetL is important for photoautotrophic growth as well as for electron transfer efficiency and stability of the cytochrome b6-f complex. The chain is Cytochrome b6-f complex subunit 6 from Nandina domestica (Heavenly bamboo).